Reading from the N-terminus, the 163-residue chain is Nucleotide-binding protein Ava_2001 (163 aa).

It belongs to the YajQ family.

Functionally, nucleotide-binding protein. The chain is Nucleotide-binding protein Ava_2001 from Trichormus variabilis (strain ATCC 29413 / PCC 7937) (Anabaena variabilis).